Here is a 266-residue protein sequence, read N- to C-terminus: MAVSLRDTVKISEFINLSKQDEILPAFMTKVKSVRISTVDKIMAVKNDSLSDVDLLKGVKLVKNGYVCLAGLVVSGEWNLPDNCRGGVSVCIVDKRMKRSNEATLGAYHAPACKKNFSFKLIPNYSITSEDAEKNPWQVLVNIKGVAMEEGYCPLSLEFVSICVVHKNNVKKGLRERILRVTDDSPIELTEKVVEEFVDEVPMAVKLERFRKTKKGKKRKKEKKKRVVGNSVNNKKINNSGKKGLKVEEIEDNVSDDESIASSSTF.

Basic residues predominate over residues K212–V227. The interval K212–F266 is disordered. Low complexity predominate over residues V228–K242. The span at E249–S259 shows a compositional bias: acidic residues.

It belongs to the tobamovirus movement protein family.

The protein resides in the host cytoplasm. Its subcellular location is the host cytoskeleton. The protein localises to the host cell junction. It is found in the host plasmodesma. Functionally, transports viral genome to neighboring plant cells directly through plasmosdesmata, without any budding. The movement protein allows efficient cell to cell propagation, by bypassing the host cell wall barrier. Forms a ribonucleoprotein complex with viral RNA. Binds microtubules and modulates microtubule stability. Can bind double-stranded DNA. The chain is Movement protein (MP) from Capsicum annuum (Capsicum pepper).